Here is a 461-residue protein sequence, read N- to C-terminus: Fumarate hydratase class II (461 aa).

Residues 99-101 (SGT), 130-133 (HPND), 140-142 (STN), and threonine 188 each bind substrate. Histidine 189 serves as the catalytic Proton donor/acceptor. The active site involves serine 319. Residues serine 320 and 325–327 (KVN) contribute to the substrate site.

It belongs to the class-II fumarase/aspartase family. Fumarase subfamily. In terms of assembly, homotetramer.

It localises to the cytoplasm. It carries out the reaction (S)-malate = fumarate + H2O. Its pathway is carbohydrate metabolism; tricarboxylic acid cycle; (S)-malate from fumarate: step 1/1. Its function is as follows. Involved in the TCA cycle. Catalyzes the stereospecific interconversion of fumarate to L-malate. The sequence is that of Fumarate hydratase class II from Prochlorococcus marinus subsp. pastoris (strain CCMP1986 / NIES-2087 / MED4).